The following is a 349-amino-acid chain: Phosphate acyltransferase (349 aa).

It belongs to the PlsX family. As to quaternary structure, homodimer. Probably interacts with PlsY.

It localises to the cytoplasm. The enzyme catalyses a fatty acyl-[ACP] + phosphate = an acyl phosphate + holo-[ACP]. It functions in the pathway lipid metabolism; phospholipid metabolism. Functionally, catalyzes the reversible formation of acyl-phosphate (acyl-PO(4)) from acyl-[acyl-carrier-protein] (acyl-ACP). This enzyme utilizes acyl-ACP as fatty acyl donor, but not acyl-CoA. This chain is Phosphate acyltransferase, found in Colwellia psychrerythraea (strain 34H / ATCC BAA-681) (Vibrio psychroerythus).